The chain runs to 416 residues: L-cysteine:1D-myo-inositol 2-amino-2-deoxy-alpha-D-glucopyranoside ligase (416 aa).

Zn(2+) is bound at residue Cys45. L-cysteinyl-5'-AMP-binding positions include Cys45–Thr48, Thr60, and Asn83–Thr85. A 'HIGH' region motif is present at residues Ile47–His57. The 'ERGGDP' region motif lies at Glu191–Pro196. Trp232 is a binding site for L-cysteinyl-5'-AMP. Cys236 is a Zn(2+) binding site. Residue Gly254 to Asp256 coordinates L-cysteinyl-5'-AMP. Residue His261 coordinates Zn(2+). Val286 is an L-cysteinyl-5'-AMP binding site. The 'KMSKS' region motif lies at Lys292 to Ser296.

Belongs to the class-I aminoacyl-tRNA synthetase family. MshC subfamily. As to quaternary structure, monomer. Zn(2+) is required as a cofactor.

The enzyme catalyses 1D-myo-inositol 2-amino-2-deoxy-alpha-D-glucopyranoside + L-cysteine + ATP = 1D-myo-inositol 2-(L-cysteinylamino)-2-deoxy-alpha-D-glucopyranoside + AMP + diphosphate + H(+). Catalyzes the ATP-dependent condensation of GlcN-Ins and L-cysteine to form L-Cys-GlcN-Ins. The chain is L-cysteine:1D-myo-inositol 2-amino-2-deoxy-alpha-D-glucopyranoside ligase from Brachybacterium faecium (strain ATCC 43885 / DSM 4810 / JCM 11609 / LMG 19847 / NBRC 14762 / NCIMB 9860 / 6-10).